Here is a 754-residue protein sequence, read N- to C-terminus: 5-methyltetrahydropteroyltriglutamate--homocysteine methyltransferase (754 aa).

Residues 15-18 and Lys-114 contribute to the 5-methyltetrahydropteroyltri-L-glutamate site; that span reads RELK. Residues 430–432 and Glu-483 contribute to the L-homocysteine site; that span reads IGS. L-methionine contacts are provided by residues 430-432 and Glu-483; that span reads IGS. 5-methyltetrahydropteroyltri-L-glutamate-binding positions include 514 to 515 and Trp-560; that span reads RC. Residue Asp-598 coordinates L-homocysteine. Position 598 (Asp-598) interacts with L-methionine. Glu-604 provides a ligand contact to 5-methyltetrahydropteroyltri-L-glutamate. The Zn(2+) site is built by His-641, Cys-643, and Glu-665. The active-site Proton donor is His-694. Position 726 (Cys-726) interacts with Zn(2+).

It belongs to the vitamin-B12 independent methionine synthase family. It depends on Zn(2+) as a cofactor.

It carries out the reaction 5-methyltetrahydropteroyltri-L-glutamate + L-homocysteine = tetrahydropteroyltri-L-glutamate + L-methionine. It participates in amino-acid biosynthesis; L-methionine biosynthesis via de novo pathway; L-methionine from L-homocysteine (MetE route): step 1/1. In terms of biological role, catalyzes the transfer of a methyl group from 5-methyltetrahydrofolate to homocysteine resulting in methionine formation. In Campylobacter jejuni subsp. doylei (strain ATCC BAA-1458 / RM4099 / 269.97), this protein is 5-methyltetrahydropteroyltriglutamate--homocysteine methyltransferase.